A 197-amino-acid chain; its full sequence is Transposon Tn552 resolvase (197 aa).

Positions 1–136 constitute a Resolvase/invertase-type recombinase catalytic domain; the sequence is MKIGYARVST…AGRIAARARG (136 aa). Residue serine 9 is the O-(5'-phospho-DNA)-serine intermediate of the active site. Positions 163–182 form a DNA-binding region, H-T-H motif; that stretch reads IKTIAEQWQVSRTTIYRYLN.

This sequence belongs to the site-specific recombinase resolvase family.

In terms of biological role, resolvase catalyzes the resolution (a site-specific recombination) of the cointegrated replicon to yield the final transposition products. This is Transposon Tn552 resolvase (tnpR) from Staphylococcus aureus.